The following is a 259-amino-acid chain: Cytosolic Fe-S cluster assembly factor Nubp2 homolog (259 aa).

Residue 14–21 (GKGGVGKS) coordinates ATP. 2 residues coordinate [4Fe-4S] cluster: Cys-188 and Cys-191.

It belongs to the Mrp/NBP35 ATP-binding proteins family. NUBP2/CFD1 subfamily. In terms of assembly, heterotetramer of 2 Nubp1 and 2 Nubp2 chains. The cofactor is [4Fe-4S] cluster.

Its subcellular location is the cytoplasm. Its function is as follows. Component of the cytosolic iron-sulfur (Fe/S) protein assembly (CIA) machinery. Required for maturation of extramitochondrial Fe-S proteins. The Nubp1-Nubp2 heterotetramer forms a Fe-S scaffold complex, mediating the de novo assembly of an Fe-S cluster and its transfer to target apoproteins. The protein is Cytosolic Fe-S cluster assembly factor Nubp2 homolog of Aedes aegypti (Yellowfever mosquito).